The primary structure comprises 749 residues: Probable serine/threonine-protein kinase drkC (749 aa).

An N-terminal signal peptide occupies residues 1–31 (MIIINKYIRMNKIAILFSFFILICCTGYSIS). Over 32–423 (YKINGINENK…TSPNYQKIIY (392 aa)) the chain is Extracellular. A disordered region spans residues 124-153 (DRTDQVSTSSSSSSFSEENKKSSSDDSAPA). A compositionally biased stretch (low complexity) spans 130–139 (STSSSSSSFS). N-linked (GlcNAc...) asparagine glycosylation is found at Asn-157, Asn-189, Asn-283, Asn-358, Asn-373, Asn-381, and Asn-397. The chain crosses the membrane as a helical span at residues 424-444 (IVVGVGIAVLLIIAVGIYFII). Over 445–749 (RLRIKNKRLN…QEIVKRLEAM (305 aa)) the chain is Cytoplasmic. Residues 491–749 (IVVQNRIGRG…QEIVKRLEAM (259 aa)) enclose the Protein kinase domain. ATP-binding positions include 497-505 (IGRGSCAEV) and Lys-518. The active-site Proton acceptor is the Asp-615.

It belongs to the protein kinase superfamily. TKL Ser/Thr protein kinase family.

It is found in the membrane. It carries out the reaction L-seryl-[protein] + ATP = O-phospho-L-seryl-[protein] + ADP + H(+). It catalyses the reaction L-threonyl-[protein] + ATP = O-phospho-L-threonyl-[protein] + ADP + H(+). The sequence is that of Probable serine/threonine-protein kinase drkC (drkC) from Dictyostelium discoideum (Social amoeba).